The primary structure comprises 225 residues: MTEETIGSRRRAAVRLKAARKHKPSSQKWLLRQLNDPYVAAAKERGFRSRAAFKLIELDEKFGLIGKGARVVDLGAAPGGWTQVALERGASRVVGIDLLDIDPIAGATLIKGDFQDESMETALAEILGGPADVVMSDMAPNTTGHTATDHLRIMGLAELALDFAFKHLAPGGAFVTKLFQGGAQGDMLNLLKRRFAQVRHAKPEASRKDSRELYLVATGYRPDAS.

Positions 79, 81, 97, 113, and 137 each coordinate S-adenosyl-L-methionine. The active-site Proton acceptor is the K177.

Belongs to the class I-like SAM-binding methyltransferase superfamily. RNA methyltransferase RlmE family.

It is found in the cytoplasm. The catalysed reaction is uridine(2552) in 23S rRNA + S-adenosyl-L-methionine = 2'-O-methyluridine(2552) in 23S rRNA + S-adenosyl-L-homocysteine + H(+). Functionally, specifically methylates the uridine in position 2552 of 23S rRNA at the 2'-O position of the ribose in the fully assembled 50S ribosomal subunit. The sequence is that of Ribosomal RNA large subunit methyltransferase E from Acidiphilium cryptum (strain JF-5).